A 209-amino-acid chain; its full sequence is High frequency lysogenization protein HflD homolog (209 aa).

The protein belongs to the HflD family.

It localises to the cytoplasm. The protein resides in the cell inner membrane. The sequence is that of High frequency lysogenization protein HflD homolog from Marinomonas sp. (strain MWYL1).